A 152-amino-acid chain; its full sequence is Transcriptional regulator MraZ (152 aa).

SpoVT-AbrB domains are found at residues 5–52 and 81–124; these read ATMV…PLPE and ASEC…DEQT.

Belongs to the MraZ family. In terms of assembly, forms oligomers.

The protein localises to the cytoplasm. It is found in the nucleoid. In terms of biological role, negatively regulates its own expression and that of the subsequent genes in the proximal part of the division and cell wall (dcw) gene cluster. Acts by binding directly to DNA. May also regulate the expression of genes outside the dcw cluster. The sequence is that of Transcriptional regulator MraZ from Yersinia pseudotuberculosis serotype O:1b (strain IP 31758).